Here is a 155-residue protein sequence, read N- to C-terminus: Ribosomal RNA large subunit methyltransferase H (155 aa).

S-adenosyl-L-methionine contacts are provided by residues Gly104 and 123 to 128; that span reads FGNITL.

It belongs to the RNA methyltransferase RlmH family. Homodimer.

It is found in the cytoplasm. It catalyses the reaction pseudouridine(1915) in 23S rRNA + S-adenosyl-L-methionine = N(3)-methylpseudouridine(1915) in 23S rRNA + S-adenosyl-L-homocysteine + H(+). Its function is as follows. Specifically methylates the pseudouridine at position 1915 (m3Psi1915) in 23S rRNA. This is Ribosomal RNA large subunit methyltransferase H from Mesoplasma florum (strain ATCC 33453 / NBRC 100688 / NCTC 11704 / L1) (Acholeplasma florum).